The chain runs to 196 residues: MLFRYLVWLFRFIEVKNVVSISLLVIGSNYLTTAISNNTSTTISPTTSSNYLLTAISNNTSTTILPTTTSSNYLTSAIPNIISDKEDDTPFSTDKTVSDGLSPITLYRAIRSTLNDTMTDILTRPYRPTTVIFHSDTPQPVKNATQGNIIKKTYRQVLTFFIQPNPLFPCFKNHEVFLNLANILNTILCIILIKNV.

2 consecutive repeat copies span residues 28-48 (SNYL…PTTS) and 49-70 (SNYL…TTTS). Residues 71–92 (SNYLTSAIPNIISDKEDDTPFS) form a 3; approximate repeat.

This sequence belongs to the asfivirus I196L family.

In African swine fever virus (strain Badajoz 1971 Vero-adapted) (Ba71V), this protein is Late protein I196L.